The following is a 331-amino-acid chain: Anthranilate phosphoribosyltransferase (331 aa).

5-phospho-alpha-D-ribose 1-diphosphate contacts are provided by residues glycine 78, 81 to 82, threonine 86, 88 to 91, 106 to 114, and serine 118; these read GD, NVST, and KHGNYSVSS. Anthranilate is bound at residue glycine 78. Position 90 (serine 90) interacts with Mg(2+). Residue asparagine 109 participates in anthranilate binding. Position 164 (arginine 164) interacts with anthranilate. 2 residues coordinate Mg(2+): aspartate 222 and glutamate 223.

The protein belongs to the anthranilate phosphoribosyltransferase family. In terms of assembly, homodimer. Requires Mg(2+) as cofactor.

The enzyme catalyses N-(5-phospho-beta-D-ribosyl)anthranilate + diphosphate = 5-phospho-alpha-D-ribose 1-diphosphate + anthranilate. The protein operates within amino-acid biosynthesis; L-tryptophan biosynthesis; L-tryptophan from chorismate: step 2/5. Functionally, catalyzes the transfer of the phosphoribosyl group of 5-phosphorylribose-1-pyrophosphate (PRPP) to anthranilate to yield N-(5'-phosphoribosyl)-anthranilate (PRA). The polypeptide is Anthranilate phosphoribosyltransferase (Haloarcula marismortui (strain ATCC 43049 / DSM 3752 / JCM 8966 / VKM B-1809) (Halobacterium marismortui)).